The chain runs to 124 residues: Small ribosomal subunit protein uS13 (124 aa).

Residues 98 to 124 (VRGQRTRCNARTRKGPRKTVGAKRKEK) form a disordered region.

The protein belongs to the universal ribosomal protein uS13 family. In terms of assembly, part of the 30S ribosomal subunit. Forms a loose heterodimer with protein S19. Forms two bridges to the 50S subunit in the 70S ribosome.

Functionally, located at the top of the head of the 30S subunit, it contacts several helices of the 16S rRNA. In the 70S ribosome it contacts the 23S rRNA (bridge B1a) and protein L5 of the 50S subunit (bridge B1b), connecting the 2 subunits; these bridges are implicated in subunit movement. Contacts the tRNAs in the A and P-sites. This Dictyoglomus turgidum (strain DSM 6724 / Z-1310) protein is Small ribosomal subunit protein uS13.